The chain runs to 173 residues: MARPDKAAAVAELTEKFRSSSAAVLTEYRGLTVAQLKALRTSLGGSAHYAVVKNTLTAIAAKEAGIDAFEGQLSGPTAIAFVEGDPVAAAKGLRDFAKANPALVIKAGVLDGKAITSSEITALADLESREVLLAKAAGAFKAKLYQAAYLFTAPASQAVRTIDALREKQADAA.

The protein belongs to the universal ribosomal protein uL10 family. In terms of assembly, part of the ribosomal stalk of the 50S ribosomal subunit. The N-terminus interacts with L11 and the large rRNA to form the base of the stalk. The C-terminus forms an elongated spine to which L12 dimers bind in a sequential fashion forming a multimeric L10(L12)X complex.

In terms of biological role, forms part of the ribosomal stalk, playing a central role in the interaction of the ribosome with GTP-bound translation factors. The chain is Large ribosomal subunit protein uL10 from Beutenbergia cavernae (strain ATCC BAA-8 / DSM 12333 / CCUG 43141 / JCM 11478 / NBRC 16432 / NCIMB 13614 / HKI 0122).